Consider the following 198-residue polypeptide: Superoxide dismutase [Mn], mitochondrial (198 aa).

H26 provides a ligand contact to Mn(2+). Position 34 is a 3'-nitrotyrosine (Y34). N6-acetyllysine; alternate occurs at positions 44 and 51. K44 and K51 each carry N6-succinyllysine; alternate. H74 serves as a coordination point for Mn(2+). The residue at position 90 (K90) is an N6-acetyllysine. K98 and K106 each carry N6-acetyllysine; alternate. Residues K98 and K106 each carry the N6-succinyllysine; alternate modification. D159 and H163 together coordinate Mn(2+). K178 is subject to N6-acetyllysine.

Belongs to the iron/manganese superoxide dismutase family. Homotetramer. Mn(2+) serves as cofactor. In terms of processing, nitrated under oxidative stress. Nitration coupled with oxidation inhibits the catalytic activity. Post-translationally, acetylation at Lys-98 decreases enzymatic activity. Deacetylated by SIRT3 upon exposure to ionizing radiations or after long fasting. Polyubiquitinated; leading to proteasomal degradation. Deubiquitinated by USP36 which increases protein stability.

Its subcellular location is the mitochondrion matrix. It catalyses the reaction 2 superoxide + 2 H(+) = H2O2 + O2. Functionally, destroys superoxide anion radicals which are normally produced within the cells and which are toxic to biological systems. In Hylobates lar (Lar gibbon), this protein is Superoxide dismutase [Mn], mitochondrial (SOD2).